A 54-amino-acid chain; its full sequence is uncharacterized protein (54 aa).

A helical transmembrane segment spans residues Ser21–Val43.

The protein localises to the membrane. This is an uncharacterized protein from Saccharomyces cerevisiae (strain ATCC 204508 / S288c) (Baker's yeast).